A 246-amino-acid chain; its full sequence is MEISLLTDVGQKRTNNQDYVNHYVNRAGRTMIILADGMGGHRAGNIASEMAVTDLGVAWVDTQIDTVNEVREWFAHYLEIENQKIHQLGQDEAYRGMGTTLEVLAIIDNQAIYAHIGDSRIGLIRGEEYHQLTSDHSLVNELLKAGQLTPEEAEAHPQKNIITQSIGQKDEIQPDFGTVILESGDYLLLDSDGLTNMISGSEIRDIVTSDIPLADKTETLVRFANNAGGLDNITVALVSMNEEDAE.

A PPM-type phosphatase domain is found at 2-240; the sequence is EISLLTDVGQ…DNITVALVSM (239 aa). Residues Asp-36, Gly-37, Asp-192, and Asp-231 each coordinate Mn(2+).

The protein belongs to the PP2C family. Interacts with the kinase domain of StkP. Mn(2+) serves as cofactor.

It localises to the cytoplasm. It carries out the reaction O-phospho-L-seryl-[protein] + H2O = L-seryl-[protein] + phosphate. It catalyses the reaction O-phospho-L-threonyl-[protein] + H2O = L-threonyl-[protein] + phosphate. With respect to regulation, phosphatase activity is inhibited by NaF but not by okadaic acid. Protein phosphatase able to dephosphorylate StkP-P and a phosphothreonine residue in a phosphopeptide synthetic substrate. PhpP and its cognate protein kinase StkP appear to constitute a functional signaling couple in vivo, PhpP's primary role probably being to control phosphorylation levels of StkP and of its targets (which include LocZ, DivIVA and KhpB (also called EloR/Jag)). PhpP thus performs an essential control of StkP activity. Overexpression confers an stkP deletion-like phenotype. The chain is Protein phosphatase PhpP (phpP) from Streptococcus pneumoniae.